The primary structure comprises 461 residues: Bifunctional protein HldE (461 aa).

The segment at methionine 1 to glutamate 312 is ribokinase. Position 191-194 (asparagine 191–glutamate 194) interacts with ATP. Aspartate 259 is an active-site residue. The interval phenylalanine 334–lysine 461 is cytidylyltransferase.

This sequence in the N-terminal section; belongs to the carbohydrate kinase PfkB family. It in the C-terminal section; belongs to the cytidylyltransferase family. In terms of assembly, homodimer.

It catalyses the reaction D-glycero-beta-D-manno-heptose 7-phosphate + ATP = D-glycero-beta-D-manno-heptose 1,7-bisphosphate + ADP + H(+). It carries out the reaction D-glycero-beta-D-manno-heptose 1-phosphate + ATP + H(+) = ADP-D-glycero-beta-D-manno-heptose + diphosphate. It functions in the pathway nucleotide-sugar biosynthesis; ADP-L-glycero-beta-D-manno-heptose biosynthesis; ADP-L-glycero-beta-D-manno-heptose from D-glycero-beta-D-manno-heptose 7-phosphate: step 1/4. The protein operates within nucleotide-sugar biosynthesis; ADP-L-glycero-beta-D-manno-heptose biosynthesis; ADP-L-glycero-beta-D-manno-heptose from D-glycero-beta-D-manno-heptose 7-phosphate: step 3/4. Its function is as follows. Catalyzes the phosphorylation of D-glycero-D-manno-heptose 7-phosphate at the C-1 position to selectively form D-glycero-beta-D-manno-heptose-1,7-bisphosphate. Catalyzes the ADP transfer from ATP to D-glycero-beta-D-manno-heptose 1-phosphate, yielding ADP-D-glycero-beta-D-manno-heptose. The sequence is that of Bifunctional protein HldE from Campylobacter jejuni subsp. doylei (strain ATCC BAA-1458 / RM4099 / 269.97).